The chain runs to 417 residues: Nuclear envelope integral membrane protein 2 (417 aa).

Positions 1-24 are cleaved as a signal peptide; that stretch reads MGPRQGRWWLLLWLPPLATLPVRG. The next 5 helical transmembrane spans lie at 148–168, 177–197, 207–227, 239–259, and 280–300; these read NIMD…FFYA, FYYS…VLLL, TFWA…CQLM, IYVL…CYKH, and LVLV…IILL.

It belongs to the NEMP family.

Its subcellular location is the nucleus inner membrane. In Homo sapiens (Human), this protein is Nuclear envelope integral membrane protein 2 (NEMP2).